The chain runs to 309 residues: Homoserine kinase (309 aa).

Residue 91–101 coordinates ATP; it reads PIGSGLGSSAC.

Belongs to the GHMP kinase family. Homoserine kinase subfamily.

The protein localises to the cytoplasm. The catalysed reaction is L-homoserine + ATP = O-phospho-L-homoserine + ADP + H(+). It functions in the pathway amino-acid biosynthesis; L-threonine biosynthesis; L-threonine from L-aspartate: step 4/5. Catalyzes the ATP-dependent phosphorylation of L-homoserine to L-homoserine phosphate. The polypeptide is Homoserine kinase (Pectobacterium carotovorum subsp. carotovorum (strain PC1)).